We begin with the raw amino-acid sequence, 407 residues long: tRNA pseudouridine synthase Pus10 (407 aa).

Aspartate 232 acts as the Nucleophile in catalysis. Substrate is bound by residues tyrosine 300 and tyrosine 369.

This sequence belongs to the pseudouridine synthase Pus10 family.

It carries out the reaction uridine(54) in tRNA = pseudouridine(54) in tRNA. The catalysed reaction is uridine(55) in tRNA = pseudouridine(55) in tRNA. In terms of biological role, responsible for synthesis of pseudouridine from uracil-54 and uracil-55 in the psi GC loop of transfer RNAs. The chain is tRNA pseudouridine synthase Pus10 from Methanosphaera stadtmanae (strain ATCC 43021 / DSM 3091 / JCM 11832 / MCB-3).